A 165-amino-acid polypeptide reads, in one-letter code: Putative pre-16S rRNA nuclease (165 aa).

It belongs to the YqgF nuclease family.

Its subcellular location is the cytoplasm. Functionally, could be a nuclease involved in processing of the 5'-end of pre-16S rRNA. This is Putative pre-16S rRNA nuclease from Brucella anthropi (strain ATCC 49188 / DSM 6882 / CCUG 24695 / JCM 21032 / LMG 3331 / NBRC 15819 / NCTC 12168 / Alc 37) (Ochrobactrum anthropi).